The primary structure comprises 832 residues: Protein wech (832 aa).

The span at Met1–Met14 shows a compositional bias: polar residues. Residues Met1 to Asn42 form a disordered region. Over residues Ala15–Asn32 the composition is skewed to low complexity. Ser107 carries the post-translational modification Phosphoserine. B box-type zinc fingers lie at residues Asn118–Leu163 and Ser184–Ile224. 8 residues coordinate Zn(2+): Cys123, Cys126, Cys145, His149, Cys189, His192, Cys211, and His216. Phosphoserine is present on residues Ser470, Ser475, and Ser506. 5 NHL repeats span residues Ser537–Asp580, Lys584–Ser627, Leu631–Glu674, Gln680–Asp722, and Leu727–Asn770.

In terms of assembly, interacts with the head domain of rhea and the kinase domain of Ilk. Interacts with AGO1. Interacts with mei-P26. In terms of tissue distribution, expressed in ovarian germline stem cells (at protein level). Expressed ubiquitously in all epithelial cells during early stages of embryogenesis. Specifically expressed at epidermal muscle attachment site.

Functionally, vital for larval development. Plays a role in tumor formation. A crucial component for the physical link between integrins and the cytoskeleton in the epidermal muscle attachment sites. This chain is Protein wech (wech), found in Drosophila melanogaster (Fruit fly).